The following is a 457-amino-acid chain: L-lysine-epsilon aminotransferase (457 aa).

Pyridoxal 5'-phosphate-binding residues include G131 and A132. 2-oxoglutarate-binding residues include R172 and Q278. Residue R172 coordinates L-lysine. Q278 contacts pyridoxal 5'-phosphate. At K304 the chain carries N6-(pyridoxal phosphate)lysine. R427 is a 2-oxoglutarate binding site.

The protein belongs to the class-III pyridoxal-phosphate-dependent aminotransferase family. As to quaternary structure, monomer. It depends on pyridoxal 5'-phosphate as a cofactor.

It catalyses the reaction L-lysine + 2-oxoglutarate = (S)-2-amino-6-oxohexanoate + L-glutamate. The protein operates within antibiotic biosynthesis; cephamycin C biosynthesis. With respect to regulation, activity is induced in the presence of high concentrations of lysine, but not by L-alpha-aminoadipic acid. Not repressed by ammonium ions. Its function is as follows. Catalyzes the transfer of the terminal amino group of L-lysine to alpha-ketoglutarate to yield L-glutamate and 2-aminoadipate 6-semialdehyde ((S)-2-amino-6-oxohexanoate), which is spontaneously converted to the dehydrated form 1-piperideine 6-carboxylate. Shows a high specificity for L-lysine as substrate although L-ornithine can also be used, leading to the formation of an o-aminobenzaldehyde reactive compound. Only cis-oxaloacetate and pyruvate can replace alpha-ketoglutarate, but with very low efficiency. The sequence is that of L-lysine-epsilon aminotransferase from Streptomyces clavuligerus.